The primary structure comprises 1057 residues: Glycine dehydrogenase (decarboxylating), mitochondrial (1057 aa).

A mitochondrion-targeting transit peptide spans 1-86 (MERARRLANR…GVGYPSQSRS (86 aa)). Basic and acidic residues predominate over residues 18–27 (SEAKQNRKTE). A disordered region spans residues 18-47 (SEAKQNRKTESTSTTTTTPLPFSLSGSSSR). The segment covering 28 to 47 (STSTTTTTPLPFSLSGSSSR) has biased composition (low complexity). N6-(pyridoxal phosphate)lysine is present on Lys792.

The protein belongs to the GcvP family. In terms of assembly, homodimer. The glycine cleavage system is composed of four proteins: P, T, L and H. Requires pyridoxal 5'-phosphate as cofactor. Highly expressed in leaves. Detected in roots and embryos.

It localises to the mitochondrion. The enzyme catalyses N(6)-[(R)-lipoyl]-L-lysyl-[glycine-cleavage complex H protein] + glycine + H(+) = N(6)-[(R)-S(8)-aminomethyldihydrolipoyl]-L-lysyl-[glycine-cleavage complex H protein] + CO2. In terms of biological role, the glycine cleavage system catalyzes the degradation of glycine. The P protein binds the alpha-amino group of glycine through its pyridoxal phosphate cofactor; CO(2) is released and the remaining methylamine moiety is then transferred to the lipoamide cofactor of the H protein. The polypeptide is Glycine dehydrogenase (decarboxylating), mitochondrial (GDCSP) (Pisum sativum (Garden pea)).